Here is a 164-residue protein sequence, read N- to C-terminus: MKSVITTTISAADAAGRFPSSSDLESVQGNIQRAAARLEAAEKLASNHEAVVKEAGDACFAKYSYLKNPGEAGDSQEKVNKCYRDVDHYMRLVNYCLVVGGTGPVDEWGIAGAREVYRTLNLPTSAYVASFAFARDRLCVPRDMSAQAGVEYAGNLDYLINALC.

Positions 82 and 139 each coordinate (2R,3E)-phycoerythrobilin.

Belongs to the phycobiliprotein family. Heterodimer of an alpha and a beta chain. In terms of processing, contains two covalently linked bilin chromophores.

It localises to the plastid. The protein localises to the chloroplast thylakoid membrane. In terms of biological role, light-harvesting photosynthetic bile pigment-protein from the phycobiliprotein complex. The protein is R-phycoerythrin alpha chain (cpeA) of Pyropia haitanensis (Red seaweed).